The sequence spans 349 residues: Dihydroorotate dehydrogenase (quinone) (349 aa).

FMN-binding positions include 67–71 (AGLDK) and threonine 91. Residue lysine 71 coordinates substrate. 116-120 (NRLGF) contributes to the substrate binding site. The FMN site is built by asparagine 147 and asparagine 180. Residue asparagine 180 participates in substrate binding. The Nucleophile role is filled by serine 183. Asparagine 185 contributes to the substrate binding site. Residues lysine 225 and threonine 253 each coordinate FMN. 254–255 (NT) serves as a coordination point for substrate. Residues glycine 276, glycine 305, and 326–327 (YT) contribute to the FMN site.

Belongs to the dihydroorotate dehydrogenase family. Type 2 subfamily. As to quaternary structure, monomer. Requires FMN as cofactor.

The protein resides in the cell membrane. The catalysed reaction is (S)-dihydroorotate + a quinone = orotate + a quinol. Its pathway is pyrimidine metabolism; UMP biosynthesis via de novo pathway; orotate from (S)-dihydroorotate (quinone route): step 1/1. In terms of biological role, catalyzes the conversion of dihydroorotate to orotate with quinone as electron acceptor. This chain is Dihydroorotate dehydrogenase (quinone), found in Bordetella avium (strain 197N).